Here is a 210-residue protein sequence, read N- to C-terminus: Large ribosomal subunit protein uL4 (210 aa).

The segment covering Gln-41 to Lys-52 has biased composition (polar residues). Positions Gln-41–Gly-71 are disordered. Basic residues predominate over residues Gly-60–Gly-71.

This sequence belongs to the universal ribosomal protein uL4 family. In terms of assembly, part of the 50S ribosomal subunit.

Functionally, one of the primary rRNA binding proteins, this protein initially binds near the 5'-end of the 23S rRNA. It is important during the early stages of 50S assembly. It makes multiple contacts with different domains of the 23S rRNA in the assembled 50S subunit and ribosome. In terms of biological role, forms part of the polypeptide exit tunnel. The chain is Large ribosomal subunit protein uL4 from Trichormus variabilis (strain ATCC 29413 / PCC 7937) (Anabaena variabilis).